We begin with the raw amino-acid sequence, 190 residues long: Large ribosomal subunit protein uL5 (190 aa).

Belongs to the universal ribosomal protein uL5 family. As to quaternary structure, part of the 50S ribosomal subunit; part of the 5S rRNA/L5/L18/L25 subcomplex. Contacts the 5S rRNA and the P site tRNA. Forms a bridge to the 30S subunit in the 70S ribosome.

This is one of the proteins that bind and probably mediate the attachment of the 5S RNA into the large ribosomal subunit, where it forms part of the central protuberance. In the 70S ribosome it contacts protein S13 of the 30S subunit (bridge B1b), connecting the 2 subunits; this bridge is implicated in subunit movement. Contacts the P site tRNA; the 5S rRNA and some of its associated proteins might help stabilize positioning of ribosome-bound tRNAs. This is Large ribosomal subunit protein uL5 from Blochmanniella floridana.